The sequence spans 280 residues: Equatorin (280 aa).

The N-terminal stretch at 1-19 (MDFILLIFLSGVFLPNIFS) is a signal peptide. At 20-183 (LQPTVEQDPG…LSELEEIKLK (164 aa)) the chain is on the vesicular side. The segment at 112–131 (ATASGEEDKRSEPSRKSSTP) is disordered. The span at 117-126 (EEDKRSEPSR) shows a compositional bias: basic and acidic residues. Residue N145 is glycosylated (N-linked (GlcNAc...) asparagine). A helical transmembrane segment spans residues 184–204 (LMLGISLMTLILLIPLLIFCF). Residues 205 to 280 (ATLYKLRHLR…AEVTEERISE (76 aa)) lie on the Cytoplasmic side of the membrane. Residue S279 is modified to Phosphoserine.

Interacts with SNAP25. Highly N- and O-glycosylated; contains sialic acid. Highly expressed in testis and epididymis. Low expression in other tissues.

It is found in the cytoplasmic vesicle. Its subcellular location is the secretory vesicle. The protein resides in the acrosome membrane. It localises to the acrosome inner membrane. The protein localises to the acrosome outer membrane. In terms of biological role, acrosomal membrane-anchored protein involved in the process of fertilization and in acrosome biogenesis. The chain is Equatorin (Eqtn) from Rattus norvegicus (Rat).